Reading from the N-terminus, the 137-residue chain is Large ribosomal subunit protein uL16 (137 aa).

Belongs to the universal ribosomal protein uL16 family. Part of the 50S ribosomal subunit.

Functionally, binds 23S rRNA and is also seen to make contacts with the A and possibly P site tRNAs. This chain is Large ribosomal subunit protein uL16, found in Maricaulis maris (strain MCS10) (Caulobacter maris).